Reading from the N-terminus, the 50-residue chain is Bacteriocin BacSp222 (50 aa).

M1 is modified (N-formylmethionine).

It is found in the secreted. Has bacteriolytic activity against Gram-positive bacteria B.subtilis, L.lactis and M.luteus and several species from genus Staphylococcus including methicillin-resistant S.aureus, with MIC values ranging from 0.11 uM to 7.8 uM. Has no activity against Gram-negative bacteria or fungi. In vitro, has a dose-dependent cytolytic effect on eukaryotic cells. The chain is Bacteriocin BacSp222 from Staphylococcus pseudintermedius.